Consider the following 514-residue polypeptide: Peptide chain release factor 3 (514 aa).

Residues 8 to 268 (KKRRTFAIIS…TFLKFAPEPH (261 aa)) form the tr-type G domain. GTP contacts are provided by residues 17–24 (SHPDAGKT), 85–89 (DTPGH), and 139–142 (NKLD).

This sequence belongs to the TRAFAC class translation factor GTPase superfamily. Classic translation factor GTPase family. PrfC subfamily.

The protein resides in the cytoplasm. Functionally, increases the formation of ribosomal termination complexes and stimulates activities of RF-1 and RF-2. It binds guanine nucleotides and has strong preference for UGA stop codons. It may interact directly with the ribosome. The stimulation of RF-1 and RF-2 is significantly reduced by GTP and GDP, but not by GMP. This Streptococcus pneumoniae (strain Hungary19A-6) protein is Peptide chain release factor 3.